We begin with the raw amino-acid sequence, 439 residues long: Adenylosuccinate synthetase (439 aa).

GTP contacts are provided by residues 25–31 (GDEGKGK), 53–55 (GHT), and K62. D26 (proton acceptor) is an active-site residue. D26 and G53 together coordinate Mg(2+). IMP-binding positions include 26–29 (DEGK) and 51–54 (NAGH). The active-site Proton donor is H54. IMP-binding residues include T141, R155, N232, and T247. GTP is bound at residue T307. A substrate-binding site is contributed by 307 to 313 (TTTNRPR). Residue R311 coordinates IMP. Residues R313, 339–341 (KLD), and 425–427 (GVG) each bind GTP.

This sequence belongs to the adenylosuccinate synthetase family. In terms of assembly, homodimer. Mg(2+) is required as a cofactor.

The protein resides in the cytoplasm. The enzyme catalyses IMP + L-aspartate + GTP = N(6)-(1,2-dicarboxyethyl)-AMP + GDP + phosphate + 2 H(+). It functions in the pathway purine metabolism; AMP biosynthesis via de novo pathway; AMP from IMP: step 1/2. Plays an important role in the salvage pathway for purine nucleotide biosynthesis. Catalyzes the first committed step in the biosynthesis of AMP from IMP. This is Adenylosuccinate synthetase from Plasmodium yoelii yoelii.